The chain runs to 2410 residues: Coprinoferrin synthetase (2410 aa).

Residues 237–646 (LERRAKTNPH…GRIDTQIKVR (410 aa)) form an adenylation 1 region. One can recognise a Carrier 1 domain in the interval 783-860 (RDCTPLEAEV…DIAQLVHVST (78 aa)). The residue at position 820 (serine 820) is an O-(pantetheine 4'-phosphoryl)serine. A condensation 1 region spans residues 891 to 1260 (DILPPFPVQE…SVEAVVNVHD (370 aa)). The tract at residues 1298–1317 (ELPLPSRRSPEPVRKVNDDE) is disordered. Basic and acidic residues predominate over residues 1305–1314 (RSPEPVRKVN). The Carrier 2 domain occupies 1324–1400 (LLDPVVVADL…RLARVVSNNK (77 aa)). O-(pantetheine 4'-phosphoryl)serine is present on serine 1361. A condensation 2 region spans residues 1436 to 1839 (IIPSTALQSG…RIGRTFSVPS (404 aa)). A Carrier 3 domain is found at 1858 to 1932 (VQAGIIHPVL…DLVLQATEIK (75 aa)). The residue at position 1893 (serine 1893) is an O-(pantetheine 4'-phosphoryl)serine. Positions 1992-2315 (FQYLFTFKLP…TPIFNVNVNV (324 aa)) are condensation 3.

It belongs to the NRP synthetase family.

Its pathway is siderophore biosynthesis. Nonribosomal peptide synthase; part of the gene cluster that mediates the biosynthesis of coprinoferrin, an acylated tripeptide hydroxamate siderophore. The biosynthesis of coprinoferrin depends on the hydroxylation of ornithine to N(5)-hydroxyornithine, catalyzed by the monooxygenase cpf2. The second step, the acylation of N(5)-hydroxy-L-ornithine to yield N(5)-hexanoyl-N(5)-hydroxyl-L-ornithine is catalyzed by a not yet identified acyltransferase. Finally, assembly of coprinoferrin is catalyzed by the nonribosomal peptide synthase (NRPS) cpf1 via amide bond formation between three N(5)-hexanoyl-N(5)-hydroxyl-L-ornithine molecules to release the linear trimer. Interestingly, proteins seemingly not directly related to biosynthesis, such as transcription factors, replication factors, and autophagy-related proteins, are conserved among the clusters homologous to the coprinoferrin cluster, suggesting that the cluster may also play developmental and cell biological functions. The chain is Coprinoferrin synthetase from Coprinopsis cinerea (strain Okayama-7 / 130 / ATCC MYA-4618 / FGSC 9003) (Inky cap fungus).